Here is a 97-residue protein sequence, read N- to C-terminus: YcgL domain-containing protein PP_4590 (97 aa).

Residues 3-87 (RICSIYKSPR…LEDEYIEHLP (85 aa)) form the YcgL domain.

This is YcgL domain-containing protein PP_4590 from Pseudomonas putida (strain ATCC 47054 / DSM 6125 / CFBP 8728 / NCIMB 11950 / KT2440).